A 189-amino-acid polypeptide reads, in one-letter code: Ribonuclease HII (189 aa).

One can recognise an RNase H type-2 domain in the interval Met1–Cys189. 3 residues coordinate a divalent metal cation: Asp6, Glu7, and Asp98.

It belongs to the RNase HII family. Mn(2+) is required as a cofactor. It depends on Mg(2+) as a cofactor.

It localises to the cytoplasm. The enzyme catalyses Endonucleolytic cleavage to 5'-phosphomonoester.. Its function is as follows. Endonuclease that specifically degrades the RNA of RNA-DNA hybrids. This is Ribonuclease HII from Acinetobacter baylyi (strain ATCC 33305 / BD413 / ADP1).